The primary structure comprises 387 residues: Leucine aminopeptidase 1 (387 aa).

The N-terminal stretch at 1 to 18 (MKFTNLSLLALSASLASA) is a signal peptide. A propeptide spanning residues 19–86 (RFVEQHETDQ…LGTLRTSSVK (68 aa)) is cleaved from the precursor. Asn179 is a glycosylation site (N-linked (GlcNAc...) asparagine). Zn(2+) is bound by residues His187, Asp206, Glu245, and Asp272. Cysteines 321 and 325 form a disulfide. Residue His354 coordinates Zn(2+).

This sequence belongs to the peptidase M28 family. M28E subfamily. Monomer. The cofactor is Zn(2+).

The protein localises to the secreted. In terms of biological role, extracellular aminopeptidase that allows assimilation of proteinaceous substrates. The polypeptide is Leucine aminopeptidase 1 (lap1) (Sclerotinia sclerotiorum (strain ATCC 18683 / 1980 / Ss-1) (White mold)).